We begin with the raw amino-acid sequence, 167 residues long: D-aminoacyl-tRNA deacylase 2 (167 aa).

The short motif at 159–160 (GP) is the Gly-transPro motif, allows the protein to recognize chirality of D-amino acids element.

It belongs to the DTD family. As to quaternary structure, homodimer.

It is found in the cytoplasm. The enzyme catalyses a D-aminoacyl-tRNA + H2O = a tRNA + a D-alpha-amino acid + H(+). The catalysed reaction is glycyl-tRNA(Ala) + H2O = tRNA(Ala) + glycine + H(+). It catalyses the reaction D-tyrosyl-tRNA(Tyr) + H2O = D-tyrosine + tRNA(Tyr). It carries out the reaction L-alanyl-tRNA(Thr) + H2O = tRNA(Thr) + L-alanine + H(+). Deacylates mischarged D-aminoacyl-tRNAs. Also deacylates mischarged glycyl-tRNA(Ala), protecting cells against glycine mischarging by AlaRS. Probably acts by rejecting L-amino acids from its binding site rather than specific recognition of D-amino acids. Catalyzes the hydrolysis of D-tyrosyl-tRNA(Tyr), has no activity on correctly charged L-tyrosyl-tRNA(Tyr). By recycling D-aminoacyl-tRNA to D-amino acids and free tRNA molecules, this enzyme counteracts the toxicity associated with the formation of D-aminoacyl-tRNA entities in vivo and helps enforce protein L-homochirality. In contrast to DTD1, deacylates L-Ala mischarged on tRNA(Thr)(G4.U69) by alanine-tRNA ligase AARS. Can deacylate L-Ala due to a relaxed specificity for substrate chirality caused by the trans conformation of the Gly-Pro motif in the active site. Also hydrolyzes correctly charged, achiral, glycyl-tRNA(Gly) in vitro, although in vivo EEF1A1/EF-Tu may protect cognate achiral glycyl-tRNA(Gly) from DTD2-mediated deacetylation. This Gallus gallus (Chicken) protein is D-aminoacyl-tRNA deacylase 2 (DTD2).